The sequence spans 1778 residues: Protein TIC 214 (1778 aa).

The next 6 membrane-spanning stretches (helical) occupy residues isoleucine 18–glycine 38, phenylalanine 67–leucine 87, proline 90–asparagine 110, valine 132–leucine 152, valine 175–isoleucine 195, and isoleucine 226–isoleucine 246. Residues glycine 1498–glutamate 1520 form a disordered region.

It belongs to the TIC214 family. As to quaternary structure, part of the Tic complex.

It localises to the plastid. The protein resides in the chloroplast inner membrane. Functionally, involved in protein precursor import into chloroplasts. May be part of an intermediate translocation complex acting as a protein-conducting channel at the inner envelope. This chain is Protein TIC 214, found in Arabis hirsuta (Hairy rock-cress).